A 119-amino-acid chain; its full sequence is Large ribosomal subunit protein bL20 (119 aa).

Belongs to the bacterial ribosomal protein bL20 family.

Binds directly to 23S ribosomal RNA and is necessary for the in vitro assembly process of the 50S ribosomal subunit. It is not involved in the protein synthesizing functions of that subunit. This is Large ribosomal subunit protein bL20 from Xanthomonas oryzae pv. oryzae (strain PXO99A).